A 159-amino-acid polypeptide reads, in one-letter code: Disease resistance response protein Pi176 (159 aa).

It belongs to the BetVI family.

The protein is Disease resistance response protein Pi176 of Pisum sativum (Garden pea).